A 435-amino-acid chain; its full sequence is Dual specificity protein kinase FUZ7 (435 aa).

The tract at residues 1 to 61 is disordered; it reads MLSSGAGSSI…TIGKSSAVTP (61 aa). Residues 46–59 show a composition bias toward polar residues; sequence AASNASTIGKSSAV. Residues 109-417 enclose the Protein kinase domain; that stretch reads LKTLSELGAG…PKDLTKHQYV (309 aa). Residues 115-123 and K138 each bind ATP; that span reads LGAGNGGTV. The active-site Proton acceptor is D231. Positions 307 to 359 are disordered; the sequence is NEEDDDSDADNNYTNEDLAGTLSPTKPAPMISLGQNEKQRRRKSKPAGVSLEG.

Belongs to the protein kinase superfamily. STE Ser/Thr protein kinase family. MAP kinase kinase subfamily.

The catalysed reaction is L-seryl-[protein] + ATP = O-phospho-L-seryl-[protein] + ADP + H(+). It catalyses the reaction L-threonyl-[protein] + ATP = O-phospho-L-threonyl-[protein] + ADP + H(+). It carries out the reaction L-tyrosyl-[protein] + ATP = O-phospho-L-tyrosyl-[protein] + ADP + H(+). Its function is as follows. Protein kinase that is necessary for a-locus-dependent processes, such as conjugation tube formation, filament formation, and maintenance of filamentous growth, and for a-locus-independent processes, such as tumor induction and teliospore germination. The chain is Dual specificity protein kinase FUZ7 (FUZ7) from Mycosarcoma maydis (Corn smut fungus).